A 282-amino-acid chain; its full sequence is Putative glycosyltransferase HI_0765 (282 aa).

It belongs to the glycosyltransferase 25 family.

The sequence is that of Putative glycosyltransferase HI_0765 from Haemophilus influenzae (strain ATCC 51907 / DSM 11121 / KW20 / Rd).